The primary structure comprises 423 residues: AP-1 complex subunit mu-1 (423 aa).

S2 bears the N-acetylserine mark. A phosphothreonine mark is found at T152, T154, and T223. The MHD domain maps to 168-421 (KNEVFLDVIE…ITQNGDYQLR (254 aa)).

This sequence belongs to the adaptor complexes medium subunit family. Adaptor protein complex 1 (AP-1) is a heterotetramer composed of two large adaptins (gamma-type subunit AP1G1 and beta-type subunit AP1B1), a medium adaptin (mu-type subunit AP1M1 or AP1M2) and a small adaptin (sigma-type subunit AP1S1 or AP1S2 or AP1S3). Interacts with MARCHF11. Post-translationally, phosphorylation of membrane-bound AP1M1/AP1M2 increases its affinity for sorting signals.

Its subcellular location is the golgi apparatus. It is found in the cytoplasmic vesicle. It localises to the clathrin-coated vesicle membrane. Functionally, subunit of clathrin-associated adaptor protein complex 1 that plays a role in protein sorting in the trans-Golgi network (TGN) and endosomes. The AP complexes mediate the recruitment of clathrin to membranes and the recognition of sorting signals within the cytosolic tails of transmembrane cargo molecules. The sequence is that of AP-1 complex subunit mu-1 (Ap1m1) from Mus musculus (Mouse).